Reading from the N-terminus, the 605-residue chain is Glucose oxidase (605 aa).

The signal sequence occupies residues 1 to 16 (MQTLLVSSLVVSLAAA). FAD-binding residues include L51 and T52. The N-linked (GlcNAc...) asparagine glycan is linked to N65. E72 lines the FAD pocket. An N-linked (GlcNAc...) asparagine glycan is attached at N111. Residues S125, N129, G130, and T132 each coordinate FAD. N183 and N190 each carry an N-linked (GlcNAc...) asparagine glycan. A disulfide bond links C186 and C228. V272 is a binding site for FAD. N280, N377, N410, and N495 each carry an N-linked (GlcNAc...) asparagine glycan. H538 serves as the catalytic Proton acceptor. Residues R559 and V560 each coordinate O2. Positions 571 and 583 each coordinate FAD.

The protein belongs to the GMC oxidoreductase family. In terms of assembly, homodimer. FAD is required as a cofactor. In terms of processing, the N-linked sugar chains of the glucose oxidase contributed to the high solubility of the enzyme in water.

It localises to the secreted. The protein resides in the cell wall. Its subcellular location is the cytoplasm. It is found in the extracellular space. The protein localises to the extracellular matrix. It catalyses the reaction beta-D-glucose + O2 = D-glucono-1,5-lactone + H2O2. In terms of biological role, glucose oxidase catalyzes the oxidation of beta-D-glucose to D-glucono-delta-lactone and hydrogen peroxide in the presence of molecular oxygen. D-glucono-delta-lactone is sequentially hydrolyzed by lactonase to D-gluconic acid, and the resulting hydrogen peroxide is hydrolyzed by catalase to oxygen and water. The activity shows high specificity to beta-D-glucose, with very low to no activity towards L-glucose, 2-deoxy-D-glucose, 3-deoxy-D-glucose, 4-deoxy-D-glucose, 5-deoxy-D-glucose, 6-deoxy-D-glucose, 3-O-methyl-D-glucose, 4-O-methyl-D-glucose, 6-O-methyl-D-glucose, 4,6-O-benzylidene-D-glucose, 5-thio-5-deoxy-D-glucose, D-mannose, D-allose, D-galactose, D-fructose, D-arabinose, D-xylose, trehalose, melibiose, L-mannomethylose, lactose, sucrose or 1,5-anhydro-D-glucitol. This chain is Glucose oxidase, found in Aspergillus niger.